The sequence spans 546 residues: MAKDVRFDTDARNRMLKGVNTLADAVKVTLGPKGRNVVIDKSFGAPRITKDGVSVAKEIELEDKFENMGAQMVKEVASRTNDEAGDGTTTATVLAQAIIKEGLKSVAAGMNPMDLKRGIDLAVTKVIAEIQGSAREVADSDEVAQVGTISANGEAEIGRQIADAMQKVGNDGVITVEENKGLETETDVVEGMQFDRGYLSPYFVTNPDKMIAELDDCLILLHEKKLSSLQPMVPLLETVIQSGKPLLIIAEDVEGEALATLVVNKLRGGLKIAAVKAPGFGDRRKAMLQDIAILTGGQVIAEDLGMKLESVTMDMLGTAKRLTISKDETTIVDGAGNKPEIEARVAQIRQQIEESTSDYDREKLQERVAKLAGGVAVIKVGGMSEIEVKERKDRVDDALNATRAAVQEGIVVGGGVALVQGGKSLAGLEGENADQNAGIAIVRRALEAPLRQIAENSGVDGSVVAGKIRESDDNAFGFNAQTEEYGDLFKFGVIDPAKVVRTALQDAASVAGLLITTEAMVADKPAKEGAPAGGGMPDMGGMGGMM.

Residues 29-32 (TLGP), Lys50, 86-90 (DGTTT), Gly414, and Asp495 each bind ATP. The disordered stretch occupies residues 526 to 546 (AKEGAPAGGGMPDMGGMGGMM). Gly residues predominate over residues 531-546 (PAGGGMPDMGGMGGMM).

It belongs to the chaperonin (HSP60) family. As to quaternary structure, forms a cylinder of 14 subunits composed of two heptameric rings stacked back-to-back. Interacts with the co-chaperonin GroES.

Its subcellular location is the cytoplasm. It catalyses the reaction ATP + H2O + a folded polypeptide = ADP + phosphate + an unfolded polypeptide.. Functionally, together with its co-chaperonin GroES, plays an essential role in assisting protein folding. The GroEL-GroES system forms a nano-cage that allows encapsulation of the non-native substrate proteins and provides a physical environment optimized to promote and accelerate protein folding. The chain is Chaperonin GroEL from Jannaschia sp. (strain CCS1).